The following is a 255-amino-acid chain: Putative deoxyribonuclease tatdn3-B (255 aa).

Residues His11, His13, Glu106, His129, His152, and Asp199 each contribute to the Zn(2+) site.

Belongs to the metallo-dependent hydrolases superfamily. TatD-type hydrolase family. Requires Mn(2+) as cofactor. The cofactor is Ca(2+). Mg(2+) serves as cofactor. It depends on Zn(2+) as a cofactor.

Its subcellular location is the nucleus. With respect to regulation, the 3'-exonuclease activity is sensitive to the metal ion present in the active site, whereas the AP endodeoxyribonuclease activity is observed in a variety of divalent metal cofactors. 3'-exoxonuclease activity is suppressed in the presence of Ca(2+), Zn(2+) and Ni(2+). In terms of biological role, exhibits 3'-exonuclease activities and apurinic/apyrimidinic (AP) endonuclease (in vitro). Show preferential AP endonuclease activity on double-stranded DNA substrates and 3'- exonuclease activity on single-stranded DNA. This is Putative deoxyribonuclease tatdn3-B (tatdn3-b) from Xenopus laevis (African clawed frog).